The chain runs to 971 residues: MDRGLSTGTHQEDDGLRERIVASQSGAALTPEALTATGEGLLKDKTGKEMKTYGRTPGGTVFTVPQTHDMVSQLLSPSEPKNLSDVAVIAILGVHILLLWGLPAGAKVPVFALIYLFWRAAYNAGIGWLLHNQSNYNTLVRWAEKTKIFVNPATGKNPHPNLYQLIKRELETKIPTDYSFENAPIEYNTWLVFRRLVDLILMCDFVSYCLFAVACSGRPVDEGALMTVLRWSAGIVLVLFNLWVKLDAHRVVKDYAWYWGDFFFLIDQELTFDGVFEMAPHPMYSVGYAGYYGISLMAASYKVLFISILAHAAQFAFLVFVENPHIDKTYNPPPPRKRTIDQESVSAASQASSSPIAPASLDEQLPHAPSYASGPPPSVHNLLGIQNLDLHRITDTSSMLIQFLVFAITVLTPSTPWYRFLFVANAAIWRIWYSVGIGLVLDRQSNRKAWTRHFVKYGETPQEAWNQWKGTYHLSMVMCYASFIAAVWKMYTFPADWGYGLVLLRHVLGAGLISLQIWTSVSIYESLGEFGWFYGDFFFDASPKLTYNGIYRFLNNPERVLGLAGVWGAVLITSSGAITFLALLSHTLTLAFIQFVERPHMQKLYGRSLRRDAGLTKSLKRSLPDPLKQLHGSVDKMFDDSFEFIEDLIDTARPKLAAGVNTFVKDTSALFQKYPARVTISRIDEDLAGYDSRDYSLEVEGTDSLSLHDVDQSSGREGLNARMPLDRRGDLKNLVFEYGSPIKVKWTAPLNHSKKDWIGLYRVIDNTSREISRVSSQGRWIATNEGSYDNSKCEQGIVTSDVVIPASQRKDGEGRDLASGEVVFSGDKLFWTQGVFEFRYHHNGKHNVMSISRPFEIRISRFDEDEIPLMDPTSVEMSLFPVVRNCFDRDPEIAPETVDEPFGSLVERDGKYAKRVVFAVHQMFGIEFAPEVVKADGSVHNLAWRICNAKRVLAPYSMPKNGAATPTEAKE.

The Lumenal segment spans residues 1–85 (MDRGLSTGTH…SPSEPKNLSD (85 aa)). Residues 86–106 (VAVIAILGVHILLLWGLPAGA) form a helical membrane-spanning segment. The Cytoplasmic segment spans residues 107–109 (KVP). The helical transmembrane segment at 110–130 (VFALIYLFWRAAYNAGIGWLL) threads the bilayer. Over 131-195 (HNQSNYNTLV…EYNTWLVFRR (65 aa)) the chain is Lumenal. A helical membrane pass occupies residues 196-216 (LVDLILMCDFVSYCLFAVACS). Topologically, residues 217 to 223 (GRPVDEG) are cytoplasmic. The chain crosses the membrane as a helical span at residues 224-244 (ALMTVLRWSAGIVLVLFNLWV). Topologically, residues 245-277 (KLDAHRVVKDYAWYWGDFFFLIDQELTFDGVFE) are lumenal. The chain crosses the membrane as a helical span at residues 278–298 (MAPHPMYSVGYAGYYGISLMA). The Cytoplasmic portion of the chain corresponds to 299–300 (AS). A helical transmembrane segment spans residues 301-321 (YKVLFISILAHAAQFAFLVFV). Over 322–397 (ENPHIDKTYN…LDLHRITDTS (76 aa)) the chain is Lumenal. Residues 398 to 418 (SMLIQFLVFAITVLTPSTPWY) form a helical membrane-spanning segment. A topological domain (cytoplasmic) is located at residue arginine 419. Residues 420–440 (FLFVANAAIWRIWYSVGIGLV) traverse the membrane as a helical segment. The Lumenal segment spans residues 441–482 (LDRQSNRKAWTRHFVKYGETPQEAWNQWKGTYHLSMVMCYAS). A helical membrane pass occupies residues 483 to 503 (FIAAVWKMYTFPADWGYGLVL). Topologically, residues 504–506 (LRH) are cytoplasmic. The chain crosses the membrane as a helical span at residues 507–527 (VLGAGLISLQIWTSVSIYESL). Residues 528 to 562 (GEFGWFYGDFFFDASPKLTYNGIYRFLNNPERVLG) are Lumenal-facing. Residues 563–583 (LAGVWGAVLITSSGAITFLAL) traverse the membrane as a helical segment. At 584 to 971 (LSHTLTLAFI…GAATPTEAKE (388 aa)) the chain is on the cytoplasmic side.

The protein belongs to the class VI-like SAM-binding methyltransferase superfamily. CHO2 family.

The protein localises to the endoplasmic reticulum membrane. The enzyme catalyses a 1,2-diacyl-sn-glycero-3-phosphoethanolamine + S-adenosyl-L-methionine = a 1,2-diacyl-sn-glycero-3-phospho-N-methylethanolamine + S-adenosyl-L-homocysteine + H(+). It participates in phospholipid metabolism; phosphatidylcholine biosynthesis. Catalyzes the first step of the methylation pathway of phosphatidylcholine biosynthesis, the SAM-dependent methylation of phosphatidylethanolamine (PE) to phosphatidylmonomethylethanolamine (PMME). This chain is Phosphatidylethanolamine N-methyltransferase (cho2), found in Aspergillus clavatus (strain ATCC 1007 / CBS 513.65 / DSM 816 / NCTC 3887 / NRRL 1 / QM 1276 / 107).